The primary structure comprises 274 residues: NH(3)-dependent NAD(+) synthetase (274 aa).

An ATP-binding site is contributed by 46-53; it reads GISGGQDS. A Mg(2+)-binding site is contributed by aspartate 52. Arginine 140 contributes to the deamido-NAD(+) binding site. Threonine 160 lines the ATP pocket. Mg(2+) is bound at residue glutamate 165. The deamido-NAD(+) site is built by lysine 173 and aspartate 180. Positions 189 and 211 each coordinate ATP. 260–261 contributes to the deamido-NAD(+) binding site; it reads HK.

It belongs to the NAD synthetase family. As to quaternary structure, homodimer.

The enzyme catalyses deamido-NAD(+) + NH4(+) + ATP = AMP + diphosphate + NAD(+) + H(+). It participates in cofactor biosynthesis; NAD(+) biosynthesis; NAD(+) from deamido-NAD(+) (ammonia route): step 1/1. Its function is as follows. Catalyzes the ATP-dependent amidation of deamido-NAD to form NAD. Uses ammonia as a nitrogen source. This Streptococcus sanguinis (strain SK36) protein is NH(3)-dependent NAD(+) synthetase.